The sequence spans 291 residues: Light-independent protochlorophyllide reductase iron-sulfur ATP-binding protein (291 aa).

ATP is bound by residues 10-15 and Lys39; that span reads GIGKST. Ser14 serves as a coordination point for Mg(2+). Cys95 and Cys129 together coordinate [4Fe-4S] cluster. 180 to 181 contributes to the ATP binding site; sequence NR.

Belongs to the NifH/BchL/ChlL family. In terms of assembly, homodimer. Protochlorophyllide reductase is composed of three subunits; ChlL, ChlN and ChlB. [4Fe-4S] cluster is required as a cofactor.

The protein localises to the plastid. It localises to the chloroplast. It catalyses the reaction chlorophyllide a + oxidized 2[4Fe-4S]-[ferredoxin] + 2 ADP + 2 phosphate = protochlorophyllide a + reduced 2[4Fe-4S]-[ferredoxin] + 2 ATP + 2 H2O. Its pathway is porphyrin-containing compound metabolism; chlorophyll biosynthesis (light-independent). Its function is as follows. Component of the dark-operative protochlorophyllide reductase (DPOR) that uses Mg-ATP and reduced ferredoxin to reduce ring D of protochlorophyllide (Pchlide) to form chlorophyllide a (Chlide). This reaction is light-independent. The L component serves as a unique electron donor to the NB-component of the complex, and binds Mg-ATP. In Picea abies (Norway spruce), this protein is Light-independent protochlorophyllide reductase iron-sulfur ATP-binding protein.